Here is a 246-residue protein sequence, read N- to C-terminus: tRNA (guanine-N(1)-)-methyltransferase (246 aa).

S-adenosyl-L-methionine is bound by residues glycine 113 and 132–137 (LGDFVV).

The protein belongs to the RNA methyltransferase TrmD family. As to quaternary structure, homodimer.

It localises to the cytoplasm. It carries out the reaction guanosine(37) in tRNA + S-adenosyl-L-methionine = N(1)-methylguanosine(37) in tRNA + S-adenosyl-L-homocysteine + H(+). Its function is as follows. Specifically methylates guanosine-37 in various tRNAs. This chain is tRNA (guanine-N(1)-)-methyltransferase, found in Latilactobacillus sakei subsp. sakei (strain 23K) (Lactobacillus sakei subsp. sakei).